Consider the following 137-residue polypeptide: L-ectoine synthase (137 aa).

Residues 118 to 137 are disordered; it reads VHREDGSYAPADEADDQKPL.

The protein belongs to the ectoine synthase family.

It carries out the reaction (2S)-4-acetamido-2-aminobutanoate = L-ectoine + H2O. Its pathway is amine and polyamine biosynthesis; ectoine biosynthesis; L-ectoine from L-aspartate 4-semialdehyde: step 3/3. With respect to regulation, seems to require potassium ions for its activity and stability. Slightly inhibited by N-ethylmaleimide. Catalyzes the circularization of gamma-N-acetyl-alpha,gamma-diaminobutyric acid (ADABA) to ectoine (1,4,5,6-tetrahydro-2-methyl-4-pyrimidine carboxylic acid), which is an excellent osmoprotectant. Does not act on N-acetylated amino acids like N-alpha-acetyl-L-asparagine,N-alpha-acetyl-L-ornithine, N-alpha-acetyl-L-lysine and N-epsilon-acetyl-L-lysine. This Halomonas elongata (strain ATCC 33173 / DSM 2581 / NBRC 15536 / NCIMB 2198 / 1H9) protein is L-ectoine synthase (ectC).